The sequence spans 349 residues: Flap endonuclease 1-B (349 aa).

An N-domain region spans residues M1–R105. D34 contributes to the Mg(2+) binding site. A DNA-binding site is contributed by R71. Positions 87, 159, 161, 180, and 182 each coordinate Mg(2+). An I-domain region spans residues D123–H254. E159 is a DNA binding site. DNA is bound by residues G232 and D234. Residue D234 participates in Mg(2+) binding.

This sequence belongs to the XPG/RAD2 endonuclease family. FEN1 subfamily. Interacts with PCNA. Three molecules of FEN1 bind to one PCNA trimer with each molecule binding to one PCNA monomer. PCNA stimulates the nuclease activity without altering cleavage specificity. The cofactor is Mg(2+). Phosphorylated. Phosphorylation upon DNA damage induces relocalization to the nuclear plasma.

It localises to the nucleus. It is found in the nucleolus. The protein localises to the nucleoplasm. The protein resides in the mitochondrion. Functionally, structure-specific nuclease with 5'-flap endonuclease and 5'-3' exonuclease activities involved in DNA replication and repair. During DNA replication, cleaves the 5'-overhanging flap structure that is generated by displacement synthesis when DNA polymerase encounters the 5'-end of a downstream Okazaki fragment. It enters the flap from the 5'-end and then tracks to cleave the flap base, leaving a nick for ligation. Also involved in the long patch base excision repair (LP-BER) pathway, by cleaving within the apurinic/apyrimidinic (AP) site-terminated flap. Acts as a genome stabilization factor that prevents flaps from equilibrating into structures that lead to duplications and deletions. Also possesses 5'-3' exonuclease activity on nicked or gapped double-stranded DNA, and exhibits RNase H activity. Also involved in replication and repair of rDNA and in repairing mitochondrial DNA. In Physcomitrium patens (Spreading-leaved earth moss), this protein is Flap endonuclease 1-B.